The sequence spans 122 residues: Large ribosomal subunit protein uL14 (122 aa).

Belongs to the universal ribosomal protein uL14 family. Part of the 50S ribosomal subunit. Forms a cluster with proteins L3 and L19. In the 70S ribosome, L14 and L19 interact and together make contacts with the 16S rRNA in bridges B5 and B8.

Functionally, binds to 23S rRNA. Forms part of two intersubunit bridges in the 70S ribosome. The sequence is that of Large ribosomal subunit protein uL14 from Paracidovorax citrulli (strain AAC00-1) (Acidovorax citrulli).